The chain runs to 96 residues: Co-chaperonin GroES (96 aa).

The protein belongs to the GroES chaperonin family. In terms of assembly, heptamer of 7 subunits arranged in a ring. Interacts with the chaperonin GroEL.

It localises to the cytoplasm. Its function is as follows. Together with the chaperonin GroEL, plays an essential role in assisting protein folding. The GroEL-GroES system forms a nano-cage that allows encapsulation of the non-native substrate proteins and provides a physical environment optimized to promote and accelerate protein folding. GroES binds to the apical surface of the GroEL ring, thereby capping the opening of the GroEL channel. The chain is Co-chaperonin GroES from Geotalea daltonii (strain DSM 22248 / JCM 15807 / FRC-32) (Geobacter daltonii).